Reading from the N-terminus, the 499-residue chain is MKRSISIFITCLLITLLTMGGMLASPASAAGTKTPVAKNGQLSIKGTQLVNRDGKAVQLKGISSHGLQWYGEYVNKDSLKWLRDDWGITVFRAAMYTADGGIIDNPSVKNKMKEAVEAAKELGIYVIIDWHILNDGNPNQNKEKAKEFFKEMSSLYGNTPNVIYEIANEPNGDVNWKRDIKPYAEEVISVIRKNDPDNIIIVGTGTWSQDVNDAADDQLKDANVMDALHFYAGTHGQFLRDKANYALSKGAPIFVTEWGTSDASGNGGVFLDQSREWLKYLDSKTISWVNWNLSDKQESSSALKPGASKTGGWRLSDLSASGTFVRENILGTKDSTKDIPETPAKDKPTQENGISVQYRAGDGSMNSNQIRPQLQIKNNGNTTVDLKDVTARYWYNAKNKGQNVDCDYAQLGCGNVTYKFVTLHKPKQGADTYLELGFKNGTLAPGASTGNIQLRLHNDDWSNYAQSGDYSFFKSNTFKTTKKITLYDQGKLIWGTEPN.

Positions Met1–Ala29 are cleaved as a signal peptide. Substrate is bound by residues His65, Trp69–Tyr70, Tyr96, and His131. Residue Glu169 is the Proton donor of the active site. Position 231 (Tyr231) interacts with substrate. Residue Glu257 is the Nucleophile of the active site. Substrate contacts are provided by residues Ala263–Ser264, Trp291, and Lys296–Glu298. The CBM3 domain maps to Gln350 to Asn499.

Belongs to the glycosyl hydrolase 5 (cellulase A) family.

It catalyses the reaction Endohydrolysis of (1-&gt;4)-beta-D-glucosidic linkages in cellulose, lichenin and cereal beta-D-glucans.. The protein is Endoglucanase (bglC) of Bacillus subtilis.